We begin with the raw amino-acid sequence, 95 residues long: Aspartyl/glutamyl-tRNA(Asn/Gln) amidotransferase subunit C (95 aa).

The protein belongs to the GatC family. In terms of assembly, heterotrimer of A, B and C subunits.

It carries out the reaction L-glutamyl-tRNA(Gln) + L-glutamine + ATP + H2O = L-glutaminyl-tRNA(Gln) + L-glutamate + ADP + phosphate + H(+). The catalysed reaction is L-aspartyl-tRNA(Asn) + L-glutamine + ATP + H2O = L-asparaginyl-tRNA(Asn) + L-glutamate + ADP + phosphate + 2 H(+). Allows the formation of correctly charged Asn-tRNA(Asn) or Gln-tRNA(Gln) through the transamidation of misacylated Asp-tRNA(Asn) or Glu-tRNA(Gln) in organisms which lack either or both of asparaginyl-tRNA or glutaminyl-tRNA synthetases. The reaction takes place in the presence of glutamine and ATP through an activated phospho-Asp-tRNA(Asn) or phospho-Glu-tRNA(Gln). This is Aspartyl/glutamyl-tRNA(Asn/Gln) amidotransferase subunit C from Phenylobacterium zucineum (strain HLK1).